The chain runs to 106 residues: UPF0235 protein OCAR_4310/OCA5_c02140 (106 aa).

Belongs to the UPF0235 family.

This chain is UPF0235 protein OCAR_4310/OCA5_c02140, found in Afipia carboxidovorans (strain ATCC 49405 / DSM 1227 / KCTC 32145 / OM5) (Oligotropha carboxidovorans).